Consider the following 410-residue polypeptide: Protein translocase subunit SecY 2 (410 aa).

10 consecutive transmembrane segments (helical) span residues 2 to 22, 45 to 65, 94 to 114, 125 to 145, 147 to 167, 188 to 208, 241 to 261, 284 to 304, 339 to 359, and 366 to 386; these read ILIIYRALFFVTIPGVNSAAL, FSIMSLGVTAYITAQIIVQLL, LTLVLGLVQATGITLGINTLT, FTIIVIAVSMTAGSFIAMWLG, LITENGLGNGISVIITAGILV, WIRFSELMIGAAILILLIVWF, VIPVIFASTIMTIPQTILMFF, GVIIYGLMIIFFEYLYSIVQI, YLSLPGSLFLMLVSIIPLLVA, and LQIGLSGSSILIITGVLIEIG.

Belongs to the SecY/SEC61-alpha family. In terms of assembly, component of the Sec protein translocase complex. Heterotrimer consisting of SecY, SecE and SecG subunits. The heterotrimers can form oligomers, although 1 heterotrimer is thought to be able to translocate proteins. Interacts with the ribosome. Interacts with SecDF, and other proteins may be involved. Interacts with SecA.

Its subcellular location is the cell membrane. Its function is as follows. The central subunit of the protein translocation channel SecYEG. Consists of two halves formed by TMs 1-5 and 6-10. These two domains form a lateral gate at the front which open onto the bilayer between TMs 2 and 7, and are clamped together by SecE at the back. The channel is closed by both a pore ring composed of hydrophobic SecY resides and a short helix (helix 2A) on the extracellular side of the membrane which forms a plug. The plug probably moves laterally to allow the channel to open. The ring and the pore may move independently. The polypeptide is Protein translocase subunit SecY 2 (Lactobacillus kefiranofaciens subsp. kefiranofaciens).